Consider the following 647-residue polypeptide: 1-phosphatidylinositol 4,5-bisphosphate phosphodiesterase zeta-1 (647 aa).

The region spanning 43–78 is the EF-hand domain; that stretch reads CHFAHVKHIFKENDRQNQGRITIEEFRAIYRCIVHR. Residues 163–307 form the PI-PLC X-box domain; the sequence is QDMNHPLSDY…LKFKILVKNR (145 aa). Active-site residues include histidine 178 and histidine 223. The PI-PLC Y-box domain occupies 386 to 502; it reads LSDLVIYTKA…GYILKPDILR (117 aa). The region spanning 502–627 is the C2 domain; sequence RDTTLGFNPN…KGYRRVPLFS (126 aa).

In terms of assembly, interacts via its C2 domain with PtdIns(3)P and, to a lesser extent, PtdIns(5)P in vitro. Ca(2+) serves as cofactor. In terms of tissue distribution, highly expressed in postpuberal testis, where expression is sperm cell-specific. Also expressed in brain of both sexes.

The protein resides in the nucleus. The protein localises to the cytoplasm. It localises to the perinuclear region. The catalysed reaction is a 1,2-diacyl-sn-glycero-3-phospho-(1D-myo-inositol-4,5-bisphosphate) + H2O = 1D-myo-inositol 1,4,5-trisphosphate + a 1,2-diacyl-sn-glycerol + H(+). Its function is as follows. The production of the second messenger molecules diacylglycerol (DAG) and inositol 1,4,5-trisphosphate (IP3) is mediated by activated phosphatidylinositol-specific phospholipase C enzymes. In vitro, hydrolyzes PtdIns(4,5)P2 in a Ca(2+)-dependent manner. Triggers intracellular Ca(2+) oscillations in oocytes solely during M phase and is involved in inducing oocyte activation and initiating embryonic development up to the blastocyst stage. Is therefore a strong candidate for the egg-activating soluble sperm factor that is transferred from the sperm into the egg cytoplasm following gamete membrane fusion. May exert an inhibitory effect on phospholipase-C-coupled processes that depend on calcium ions and protein kinase C, including CFTR trafficking and function. This is 1-phosphatidylinositol 4,5-bisphosphate phosphodiesterase zeta-1 from Mus musculus (Mouse).